Reading from the N-terminus, the 1574-residue chain is Sterol 3-beta-glucosyltransferase (1574 aa).

Polar residues predominate over residues threonine 37–asparagine 48. Disordered regions lie at residues threonine 37 to glutamate 61 and alanine 102 to leucine 170. Basic and acidic residues-rich tracts occupy residues glutamate 107 to arginine 121 and proline 128 to tyrosine 138. Acidic residues predominate over residues aspartate 139 to isoleucine 148. Positions glutamate 149 to leucine 170 are enriched in basic and acidic residues. Residues aspartate 253–threonine 288 enclose the GRAM 1 domain. Positions aspartate 323–phenylalanine 471 constitute a PH domain. 4 disordered regions span residues glycine 389–glutamate 413, arginine 538–proline 559, alanine 651–glycine 722, and aspartate 774–asparagine 806. The span at isoleucine 692–lysine 701 shows a compositional bias: polar residues. The segment covering serine 702–proline 711 has biased composition (basic and acidic residues). A compositionally biased stretch (polar residues) spans aspartate 712 to glycine 722. Residues arginine 854–lysine 920 enclose the GRAM 2 domain. Residues arginine 964–serine 976 are compositionally biased toward basic and acidic residues. Residues arginine 964 to lysine 996 form a disordered region. A compositionally biased stretch (polar residues) spans phenylalanine 985 to lysine 996. 12 residues coordinate UDP-alpha-D-glucose: serine 1057, arginine 1058, aspartate 1060, asparagine 1333, isoleucine 1364, histidine 1366, histidine 1379, serine 1382, glycine 1383, threonine 1384, aspartate 1403, and glutamine 1404. The segment at aspartate 1505–lysine 1574 is disordered. Basic and acidic residues predominate over residues aspartate 1510–tyrosine 1533. A compositionally biased stretch (polar residues) spans glycine 1563–lysine 1574.

Belongs to the glycosyltransferase 28 family.

Its subcellular location is the cytoplasm. It localises to the membrane. The enzyme catalyses a sterol + UDP-alpha-D-glucose = a sterol 3-beta-D-glucoside + UDP + H(+). The catalysed reaction is ergosterol + UDP-alpha-D-glucose = ergosteryl 3-beta-D-glucoside + UDP + H(+). In terms of biological role, sterol glycosyltransferase responsible for the glycosylation of ergosterol to form ergosterol-glucoside. This is Sterol 3-beta-glucosyltransferase from Debaryomyces hansenii (strain ATCC 36239 / CBS 767 / BCRC 21394 / JCM 1990 / NBRC 0083 / IGC 2968) (Yeast).